The primary structure comprises 510 residues: MEEPQAGDAARFSCPPNFTAKPPASESPRFSLEALTGPDTELWLIQAPADFAPECFNGRHVPLSGSQIVKGKLAGKRHRYRVLSSCPQAGEATLLAPSTEAGGGLTCASAPQGTLRILEGPQQSLSGSPLQPIPASPPPQIPPGLRPRFCAFGGNPPVTGPRSALAPNLLTSGKKKKEMQVTEAPVTQEAVNGHGALEVDMALGSPEMDVRKKKKKKNQQLKEPEAAGPVGTEPTVETLEPLGVLFPSTTKKRKKPKGKETFEPEDKTVKQEQINTEPLEDTVLSPTKKRKRQKGTEGMEPEEGVTVESQPQVKVEPLEEAIPLPPTKKRKKEKGQMAMMEPGTEAMEPVEPEMKPLESPGGTMAPQQPEGAKPQAQAALAAPKKKTKKEKQQDATVEPETEVVGPELPDDLEPQAAPTSTKKKKKKKERGHTVTEPIQPLEPELPGEGQPEARATPGSTKKRKKQSQESRMPETVPQEEMPGPPLNSESGEEAPTGRDKKRKQQQQQPV.

An N-acetylmethionine modification is found at Met-1. The tract at residues 1-31 (MEEPQAGDAARFSCPPNFTAKPPASESPRFS) is disordered. Position 27 is a phosphoserine (Ser-27). Phosphotyrosine is present on Tyr-80. A disordered region spans residues 120–143 (GPQQSLSGSPLQPIPASPPPQIPP). 4 positions are modified to phosphoserine: Ser-128, Ser-136, Ser-172, and Ser-205. Over residues 131–143 (QPIPASPPPQIPP) the composition is skewed to pro residues. Positions 203 to 510 (LGSPEMDVRK…KRKQQQQQPV (308 aa)) are disordered. Residues 258-270 (GKETFEPEDKTVK) are compositionally biased toward basic and acidic residues. Lys-270 participates in a covalent cross-link: Glycyl lysine isopeptide (Lys-Gly) (interchain with G-Cter in SUMO1); alternate. Lys-270 is covalently cross-linked (Glycyl lysine isopeptide (Lys-Gly) (interchain with G-Cter in SUMO2); alternate). Ser-285 bears the Phosphoserine mark. Residue Thr-287 is modified to Phosphothreonine. Residue Ser-309 is modified to Phosphoserine. A Glycyl lysine isopeptide (Lys-Gly) (interchain with G-Cter in SUMO1); alternate cross-link involves residue Lys-314. Residue Lys-314 forms a Glycyl lysine isopeptide (Lys-Gly) (interchain with G-Cter in SUMO2); alternate linkage. Low complexity-rich tracts occupy residues 372–382 (AKPQAQAALAA) and 394–407 (DATV…VGPE). Over residues 421-430 (TKKKKKKKER) the composition is skewed to basic residues. The span at 436 to 452 (EPIQPLEPELPGEGQPE) shows a compositional bias: low complexity. A Phosphoserine modification is found at Ser-490.

Belongs to the eukaryotic RPA34 RNA polymerase subunit family. Component of the RNA polymerase I (Pol I) complex consisting of 13 subunits: a ten-subunit catalytic core composed of POLR1A/RPA1, POLR1B/RPA2, POLR1C/RPAC1, POLR1D/RPAC2, POLR1H/RPA12, POLR2E/RPABC1, POLR2F/RPABC2, POLR2H/RPABC3, POLR2K/RPABC4 and POLR2L/RPABC5; a mobile stalk subunit POLR1F/RPA43 protruding from the core and additional subunits homologous to general transcription factors POLR1E/RPA49 and POLR1G/RPA34. Forms a heterodimer with POLR1E/RPA49. Part of Pol I pre-initiation complex (PIC), in which Pol I core assembles with RRN3 and promoter-bound UTBF and SL1/TIF-IB complex. Interacts with TAF1A thereby associates with the SL1/TIF-IB complex. Interacts with UBTF. Interacts with POLR1E/PRAF1 through its N-terminal region. As to quaternary structure, interacts with CD3E. Post-translationally, undergoes tyrosine phosphorylation upon T-cell receptor (TCR) stimulation. This phosphorylation has not been confirmed by other groups. In terms of processing, phosphorylated on tyrosine residues in initiation-competent Pol I-beta complexes but not in Pol I-alpha complexes.

The protein resides in the nucleus. Its subcellular location is the nucleolus. It is found in the chromosome. In terms of biological role, component of RNA polymerase I (Pol I), a DNA-dependent RNA polymerase which synthesizes ribosomal RNA precursors using the four ribonucleoside triphosphates as substrates. Involved in UBTF-activated transcription, presumably at a step following PIC formation. Functionally, has been described as a component of preformed T-cell receptor (TCR) complex. This chain is DNA-directed RNA polymerase I subunit RPA34, found in Homo sapiens (Human).